A 350-amino-acid chain; its full sequence is Serine-threonine kinase receptor-associated protein (350 aa).

7 WD repeats span residues 12–56 (GHTR…GTFL), 57–96 (GHKG…ELMT), 98–137 (AHKH…AEPK), 141–179 (GHTS…EVKS), 180–212 (LNFN…HSAV), 221–262 (EAPA…ESYK), and 263–302 (GHFG…TYGL). 3 positions are modified to phosphoserine: Ser-312, Ser-335, and Ser-338.

Belongs to the WD repeat STRAP family. Part of the core SMN complex that contains SMN1, GEMIN2/SIP1, DDX20/GEMIN3, GEMIN4, GEMIN5, GEMIN6, GEMIN7, GEMIN8 and STRAP/UNRIP. Part of the SMN-Sm complex that contains SMN1, GEMIN2/SIP1, DDX20/GEMIN3, GEMIN4, GEMIN5, GEMIN6, GEMIN7, GEMIN8, STRAP/UNRIP and the Sm proteins SNRPB, SNRPD1, SNRPD2, SNRPD3, SNRPE, SNRPF and SNRPG. Associates with the SMN complex in the cytoplasm but not in the nucleus. Interacts with GEMIN6; the interaction is direct. Interacts with GEMIN7; the interaction is direct. Interacts with CSDE1/UNR and MAWBP. Interacts with PDPK1. Interacts with TRIM48.

The protein localises to the cytoplasm. It is found in the nucleus. The SMN complex catalyzes the assembly of small nuclear ribonucleoproteins (snRNPs), the building blocks of the spliceosome, and thereby plays an important role in the splicing of cellular pre-mRNAs. Most spliceosomal snRNPs contain a common set of Sm proteins SNRPB, SNRPD1, SNRPD2, SNRPD3, SNRPE, SNRPF and SNRPG that assemble in a heptameric protein ring on the Sm site of the small nuclear RNA to form the core snRNP (Sm core). In the cytosol, the Sm proteins SNRPD1, SNRPD2, SNRPE, SNRPF and SNRPG are trapped in an inactive 6S pICln-Sm complex by the chaperone CLNS1A that controls the assembly of the core snRNP. To assemble core snRNPs, the SMN complex accepts the trapped 5Sm proteins from CLNS1A forming an intermediate. Binding of snRNA inside 5Sm triggers eviction of the SMN complex, thereby allowing binding of SNRPD3 and SNRPB to complete assembly of the core snRNP. STRAP plays a role in the cellular distribution of the SMN complex. Negatively regulates TGF-beta signaling but positively regulates the PDPK1 kinase activity by enhancing its autophosphorylation and by significantly reducing the association of PDPK1 with 14-3-3 protein. In Homo sapiens (Human), this protein is Serine-threonine kinase receptor-associated protein (STRAP).